The chain runs to 147 residues: Microsomal glutathione S-transferase 2 (147 aa).

Helical transmembrane passes span 6–26, 62–82, and 107–127; these read SLLA…AWRV, VFIV…AACL, and GFRL…LGVA.

In terms of assembly, homotrimer.

The protein localises to the endoplasmic reticulum membrane. The protein resides in the microsome membrane. The enzyme catalyses RX + glutathione = an S-substituted glutathione + a halide anion + H(+). The catalysed reaction is 1-chloro-2,4-dinitrobenzene + glutathione = 2,4-dinitrophenyl-S-glutathione + chloride + H(+). It catalyses the reaction leukotriene C4 = leukotriene A4 + glutathione. It carries out the reaction (5S)-hydroperoxy-(6E,8Z,11Z,14Z)-eicosatetraenoate + 2 glutathione = (5S)-hydroxy-(6E,8Z,11Z,14Z)-eicosatetraenoate + glutathione disulfide + H2O. Its activity is regulated as follows. Each monomer binds on GSH molecule but only one subunit is catalytically active. In terms of biological role, catalyzes several different glutathione-dependent reactions. Catalyzes the glutathione-dependent reduction of lipid hydroperoxides, such as 5-HPETE. Has glutathione transferase activity, toward xenobiotic electrophiles, such as 1-chloro-2, 4-dinitrobenzene (CDNB). Also catalyzes the conjugation of leukotriene A4 with reduced glutathione to form leukotriene C4 (LTC4). Involved in oxidative DNA damage induced by ER stress and anticancer agents by activating LTC4 biosynthetic machinery in nonimmune cells. The polypeptide is Microsomal glutathione S-transferase 2 (Mus musculus (Mouse)).